A 616-amino-acid chain; its full sequence is MPKYRSATTTHGRNMAGARALWRATGMTDDDFGKPIIAVVNSFTQFVPGHVHLRDLGKLVAEQIEASGGVAKEFNTIAVDDGIAMGHGGMLYSLPSRELIADSVEYMVNAHCADAMVCISNCDKITPGMLMASLRLNIPVIFVSGGPMEAGKTKLLDKIIKLDLIDAMIQGANPDVSDEDSNQIERSACPTCGSCSGMFTANSMNCLTEALGLSQPGNGSLLATHADRKQLFLNAGERIVGLAKRYYEQDDTSALPRSIASKAAFENAMTLDIAMGGSTNTVLHLLAAAQEGEVDFTMADIDRLSRKVPHLCKVAPSTQKYHMEDVHRSGGVIGILGELGRSGLLNGDVHNVLGLSLPETLARYDVMVSDDAAVKSMYAAGPAGIRTTQAFSQDCRWPSLDTDRQEGCIRAREFAYSQDGGLAVLYGNIAEDGCIVKTAGVDKGSLVFRGPAKVYESQEAASEAILGGKVVAGDVVVIRYEGPKGGPGMQEMLYPTTFLKSVGLGKSCALITDGRFSGGTSGLSIGHVSPEAASGGLIGLVRDGDIIDINIAGRGIVLDVADSELAARRETELARGAAAWTPVARERQVSFALKAYASLATSADKGAVRDKAKLGG.

Asp81 is a Mg(2+) binding site. Position 122 (Cys122) interacts with [2Fe-2S] cluster. Mg(2+) contacts are provided by Asp123 and Lys124. The residue at position 124 (Lys124) is an N6-carboxylysine. Residue Cys195 coordinates [2Fe-2S] cluster. Glu491 serves as a coordination point for Mg(2+). The active-site Proton acceptor is the Ser517.

The protein belongs to the IlvD/Edd family. Homodimer. The cofactor is [2Fe-2S] cluster. Requires Mg(2+) as cofactor.

It carries out the reaction (2R)-2,3-dihydroxy-3-methylbutanoate = 3-methyl-2-oxobutanoate + H2O. It catalyses the reaction (2R,3R)-2,3-dihydroxy-3-methylpentanoate = (S)-3-methyl-2-oxopentanoate + H2O. Its pathway is amino-acid biosynthesis; L-isoleucine biosynthesis; L-isoleucine from 2-oxobutanoate: step 3/4. It functions in the pathway amino-acid biosynthesis; L-valine biosynthesis; L-valine from pyruvate: step 3/4. Functionally, functions in the biosynthesis of branched-chain amino acids. Catalyzes the dehydration of (2R,3R)-2,3-dihydroxy-3-methylpentanoate (2,3-dihydroxy-3-methylvalerate) into 2-oxo-3-methylpentanoate (2-oxo-3-methylvalerate) and of (2R)-2,3-dihydroxy-3-methylbutanoate (2,3-dihydroxyisovalerate) into 2-oxo-3-methylbutanoate (2-oxoisovalerate), the penultimate precursor to L-isoleucine and L-valine, respectively. The protein is Dihydroxy-acid dehydratase of Sodalis glossinidius (strain morsitans).